A 306-amino-acid polypeptide reads, in one-letter code: Pantothenate kinase (306 aa).

An ATP-binding site is contributed by 91–98 (GSVAVGKS).

It belongs to the prokaryotic pantothenate kinase family.

It is found in the cytoplasm. It carries out the reaction (R)-pantothenate + ATP = (R)-4'-phosphopantothenate + ADP + H(+). The protein operates within cofactor biosynthesis; coenzyme A biosynthesis; CoA from (R)-pantothenate: step 1/5. The polypeptide is Pantothenate kinase (Streptococcus agalactiae serotype Ia (strain ATCC 27591 / A909 / CDC SS700)).